Reading from the N-terminus, the 265-residue chain is Cytochrome c oxidase subunit 3 (265 aa).

7 consecutive transmembrane segments (helical) span residues 16–36, 41–61, 84–104, 137–157, 162–182, 200–220, and 245–265; these read PWPI…VMYM, GGAT…FVWW, YGSI…FWAS, TPIL…ILAG, AVYA…FQGM, FYLA…FSII, and WHFV…WGGI.

This sequence belongs to the cytochrome c oxidase subunit 3 family. As to quaternary structure, component of the cytochrome c oxidase (complex IV, CIV), a multisubunit enzyme composed of a catalytic core of 3 subunits and several supernumerary subunits. The complex exists as a monomer or a dimer and forms supercomplexes (SCs) in the inner mitochondrial membrane with ubiquinol-cytochrome c oxidoreductase (cytochrome b-c1 complex, complex III, CIII).

The protein resides in the mitochondrion inner membrane. It catalyses the reaction 4 Fe(II)-[cytochrome c] + O2 + 8 H(+)(in) = 4 Fe(III)-[cytochrome c] + 2 H2O + 4 H(+)(out). Its function is as follows. Component of the cytochrome c oxidase, the last enzyme in the mitochondrial electron transport chain which drives oxidative phosphorylation. The respiratory chain contains 3 multisubunit complexes succinate dehydrogenase (complex II, CII), ubiquinol-cytochrome c oxidoreductase (cytochrome b-c1 complex, complex III, CIII) and cytochrome c oxidase (complex IV, CIV), that cooperate to transfer electrons derived from NADH and succinate to molecular oxygen, creating an electrochemical gradient over the inner membrane that drives transmembrane transport and the ATP synthase. Cytochrome c oxidase is the component of the respiratory chain that catalyzes the reduction of oxygen to water. Electrons originating from reduced cytochrome c in the intermembrane space (IMS) are transferred via the dinuclear copper A center (CU(A)) of subunit 2 and heme A of subunit 1 to the active site in subunit 1, a binuclear center (BNC) formed by heme A3 and copper B (CU(B)). The BNC reduces molecular oxygen to 2 water molecules using 4 electrons from cytochrome c in the IMS and 4 protons from the mitochondrial matrix. In Oenothera berteroana (Bertero's evening primrose), this protein is Cytochrome c oxidase subunit 3 (COX3).